Consider the following 363-residue polypeptide: Glutamate 5-kinase (363 aa).

K6 provides a ligand contact to ATP. The substrate site is built by S46, D133, and N145. ATP contacts are provided by residues 165-166 and 207-213; these read TD and TGGMHTK. The PUA domain occupies 271–349; that stretch reads TGRLLLDEGA…RDIEAVLGFT (79 aa).

It belongs to the glutamate 5-kinase family.

It is found in the cytoplasm. The catalysed reaction is L-glutamate + ATP = L-glutamyl 5-phosphate + ADP. The protein operates within amino-acid biosynthesis; L-proline biosynthesis; L-glutamate 5-semialdehyde from L-glutamate: step 1/2. Catalyzes the transfer of a phosphate group to glutamate to form L-glutamate 5-phosphate. This Deinococcus geothermalis (strain DSM 11300 / CIP 105573 / AG-3a) protein is Glutamate 5-kinase.